The chain runs to 765 residues: FHF complex subunit HOOK interacting protein 2A (765 aa).

Composition is skewed to polar residues over residues 200-209 (LSTDTGQSCQ) and 538-550 (NTLS…SSSP). Disordered stretches follow at residues 200–234 (LSTD…QMGD) and 538–562 (NTLS…TDGK).

Belongs to the FHIP family.

In terms of biological role, may be required for proper functioning of the nervous system. In Bos taurus (Bovine), this protein is FHF complex subunit HOOK interacting protein 2A (FHIP2A).